Reading from the N-terminus, the 407-residue chain is Probable tRNA sulfurtransferase (407 aa).

Residues 61 to 165 (NEITYRLSKI…LDAIYMYEEV (105 aa)) enclose the THUMP domain. ATP-binding positions include 183 to 184 (ML), 208 to 209 (HF), arginine 265, glycine 287, and glutamine 296.

It belongs to the ThiI family.

It localises to the cytoplasm. It carries out the reaction [ThiI sulfur-carrier protein]-S-sulfanyl-L-cysteine + a uridine in tRNA + 2 reduced [2Fe-2S]-[ferredoxin] + ATP + H(+) = [ThiI sulfur-carrier protein]-L-cysteine + a 4-thiouridine in tRNA + 2 oxidized [2Fe-2S]-[ferredoxin] + AMP + diphosphate. It catalyses the reaction [ThiS sulfur-carrier protein]-C-terminal Gly-Gly-AMP + S-sulfanyl-L-cysteinyl-[cysteine desulfurase] + AH2 = [ThiS sulfur-carrier protein]-C-terminal-Gly-aminoethanethioate + L-cysteinyl-[cysteine desulfurase] + A + AMP + 2 H(+). It participates in cofactor biosynthesis; thiamine diphosphate biosynthesis. In terms of biological role, catalyzes the ATP-dependent transfer of a sulfur to tRNA to produce 4-thiouridine in position 8 of tRNAs, which functions as a near-UV photosensor. Also catalyzes the transfer of sulfur to the sulfur carrier protein ThiS, forming ThiS-thiocarboxylate. This is a step in the synthesis of thiazole, in the thiamine biosynthesis pathway. The sulfur is donated as persulfide by IscS. The chain is Probable tRNA sulfurtransferase from Staphylococcus aureus (strain NCTC 8325 / PS 47).